A 155-amino-acid chain; its full sequence is Cytochrome P450 (155 aa).

Cysteine 99 lines the heme pocket.

It belongs to the cytochrome P450 family. Heme is required as a cofactor.

In Helianthus annuus (Common sunflower), this protein is Cytochrome P450.